A 215-amino-acid polypeptide reads, in one-letter code: N-(5'-phosphoribosyl)anthranilate isomerase (215 aa).

This sequence belongs to the TrpF family.

The catalysed reaction is N-(5-phospho-beta-D-ribosyl)anthranilate = 1-(2-carboxyphenylamino)-1-deoxy-D-ribulose 5-phosphate. Its pathway is amino-acid biosynthesis; L-tryptophan biosynthesis; L-tryptophan from chorismate: step 3/5. The sequence is that of N-(5'-phosphoribosyl)anthranilate isomerase from Ruegeria sp. (strain TM1040) (Silicibacter sp.).